Here is a 308-residue protein sequence, read N- to C-terminus: 4-hydroxy-3-methylbut-2-enyl diphosphate reductase (308 aa).

Residue C12 coordinates [4Fe-4S] cluster. H43 and H77 together coordinate (2E)-4-hydroxy-3-methylbut-2-enyl diphosphate. Dimethylallyl diphosphate contacts are provided by H43 and H77. H43 and H77 together coordinate isopentenyl diphosphate. C99 contacts [4Fe-4S] cluster. H127 provides a ligand contact to (2E)-4-hydroxy-3-methylbut-2-enyl diphosphate. H127 lines the dimethylallyl diphosphate pocket. Isopentenyl diphosphate is bound at residue H127. E129 functions as the Proton donor in the catalytic mechanism. T167 is a (2E)-4-hydroxy-3-methylbut-2-enyl diphosphate binding site. C197 lines the [4Fe-4S] cluster pocket. Residues S225, S226, N227, and S269 each contribute to the (2E)-4-hydroxy-3-methylbut-2-enyl diphosphate site. Dimethylallyl diphosphate contacts are provided by S225, S226, N227, and S269. Isopentenyl diphosphate contacts are provided by S225, S226, N227, and S269.

The protein belongs to the IspH family. It depends on [4Fe-4S] cluster as a cofactor.

The enzyme catalyses isopentenyl diphosphate + 2 oxidized [2Fe-2S]-[ferredoxin] + H2O = (2E)-4-hydroxy-3-methylbut-2-enyl diphosphate + 2 reduced [2Fe-2S]-[ferredoxin] + 2 H(+). It carries out the reaction dimethylallyl diphosphate + 2 oxidized [2Fe-2S]-[ferredoxin] + H2O = (2E)-4-hydroxy-3-methylbut-2-enyl diphosphate + 2 reduced [2Fe-2S]-[ferredoxin] + 2 H(+). It functions in the pathway isoprenoid biosynthesis; dimethylallyl diphosphate biosynthesis; dimethylallyl diphosphate from (2E)-4-hydroxy-3-methylbutenyl diphosphate: step 1/1. It participates in isoprenoid biosynthesis; isopentenyl diphosphate biosynthesis via DXP pathway; isopentenyl diphosphate from 1-deoxy-D-xylulose 5-phosphate: step 6/6. Catalyzes the conversion of 1-hydroxy-2-methyl-2-(E)-butenyl 4-diphosphate (HMBPP) into a mixture of isopentenyl diphosphate (IPP) and dimethylallyl diphosphate (DMAPP). Acts in the terminal step of the DOXP/MEP pathway for isoprenoid precursor biosynthesis. This is 4-hydroxy-3-methylbut-2-enyl diphosphate reductase from Wolbachia pipientis subsp. Culex pipiens (strain wPip).